The primary structure comprises 758 residues: 52 kDa repressor of the inhibitor of the protein kinase (758 aa).

The THAP-type zinc-finger motif lies at 1-86; the sequence is MPNFCAAPNC…LRDNAIPTIF (86 aa). Positions 116 to 141 are disordered; that stretch reads QKKIEETSEQEQETNTNAQNPSAEAV. S563 bears the Phosphoserine mark.

As to quaternary structure, interacts with DNAJC3, probably sequestring it.

In terms of biological role, upstream regulator of interferon-induced serine/threonine protein kinase R (PKR). May block the PKR-inhibitory function of DNAJC3, resulting in restoration of kinase activity and suppression of cell growth. This chain is 52 kDa repressor of the inhibitor of the protein kinase, found in Mus musculus (Mouse).